Reading from the N-terminus, the 906-residue chain is Disintegrin and metalloproteinase domain-containing protein 22 (906 aa).

The signal sequence occupies residues 1–25 (MQAAVAVSVPFLLLCVLGTCPPARC). A propeptide spanning residues 26–222 (GQAGDASLME…KFILKPRPKR (197 aa)) is cleaved from the precursor. N-linked (GlcNAc...) asparagine glycosylation is present at Asn-175. The Extracellular segment spans residues 223–736 (SKRQLRRYPR…LSGNGVAGTN (514 aa)). Residues 239 to 438 (KYIELMIVND…GGGACLFNKP (200 aa)) form the Peptidase M12B domain. Cystine bridges form between Cys-349–Cys-433, Cys-392–Cys-417, Cys-394–Cys-401, Cys-447–Cys-477, Cys-458–Cys-474, Cys-460–Cys-466, Cys-473–Cys-494, Cys-485–Cys-491, Cys-490–Cys-516, Cys-503–Cys-523, Cys-510–Cys-542, Cys-535–Cys-547, Cys-554–Cys-605, Cys-569–Cys-635, Cys-583–Cys-593, Cys-600–Cys-663, and Cys-657–Cys-668. Residues 444 to 531 (PPECGNGFIE…QCAPNIHKMD (88 aa)) enclose the Disintegrin domain. Asn-519 carries N-linked (GlcNAc...) asparagine glycosylation. Asn-634 carries N-linked (GlcNAc...) asparagine glycosylation. Residue Asn-675 is glycosylated (N-linked (GlcNAc...) asparagine). Positions 675–712 (NFSTCLSSKEGTICSGNGVCSNELKCVCNRHWIGSDCN) constitute an EGF-like domain. Intrachain disulfides connect Cys-679/Cys-694, Cys-688/Cys-700, and Cys-702/Cys-711. A helical membrane pass occupies residues 737 to 757 (IIIGIIAGTILVLALILGITA). Residues 758-906 (WGYKNYREQR…QSARLWETSI (149 aa)) lie on the Cytoplasmic side of the membrane. The segment at 785 to 906 (YSDIPPGVST…QSARLWETSI (122 aa)) is disordered. A compositionally biased stretch (low complexity) spans 793–810 (STNSASSSKKRSNGLSHS). Ser-810 carries the post-translational modification Phosphoserine. The segment covering 811–829 (WSERIPDTKHISDICENGR) has biased composition (basic and acidic residues). At Ser-834 the chain carries Phosphoserine. Residues 842–853 (NKKKIRGKRFRP) are compositionally biased toward basic residues. A phosphoserine mark is found at Ser-857, Ser-862, Ser-866, and Ser-870. Positions 862–877 (SPAKSPSSSTGSIASS) are enriched in low complexity.

Interacts with LGI1. Interacts with DLG4/PSD95. Also binds LGI4. Interacts with KCNA2 and DLG2. Interacts with ADAM11. Interacts (via C-terminus) with YWHAB/14-3-3 beta. Interacts (via C-terminus) with YWHAZ/14-3-3 zeta. The precursor is cleaved by a furin endopeptidase. In terms of tissue distribution, highly expressed in the brain and in some high-grade but not low-grade gliomas. Detected slightly or not at all in other tissues.

Its subcellular location is the cell membrane. It is found in the cell projection. The protein localises to the axon. Probable ligand for integrin in the brain. This is a non catalytic metalloprotease-like protein. Involved in regulation of cell adhesion and spreading and in inhibition of cell proliferation. Neuronal receptor for LGI1. The sequence is that of Disintegrin and metalloproteinase domain-containing protein 22 (ADAM22) from Homo sapiens (Human).